Reading from the N-terminus, the 475-residue chain is Tubulin gamma chain (475 aa).

GTP is bound at residue 142 to 148 (AGGTGSG). The interval 455-475 (GKQVSGEGNTSGTVDSRVGAS) is disordered.

The protein belongs to the tubulin family.

It localises to the cytoplasm. The protein resides in the cytoskeleton. The protein localises to the microtubule organizing center. Its function is as follows. Tubulin is the major constituent of microtubules. The gamma chain is found at microtubule organizing centers (MTOC) such as the spindle poles, suggesting that it is involved in the minus-end nucleation of microtubule assembly. In Physcomitrium patens (Spreading-leaved earth moss), this protein is Tubulin gamma chain (TUBG1).